We begin with the raw amino-acid sequence, 663 residues long: Beta-galactosidase BgaH (663 aa).

Residue R103 participates in substrate binding. Zn(2+) is bound at residue C107. Residue N141 coordinates substrate. The active-site Proton donor is the E142. Residues C151, C153, and C156 each contribute to the Zn(2+) site. The Nucleophile role is filled by E311. Substrate is bound by residues W319 and 359-362 (EQYH).

Belongs to the glycosyl hydrolase 42 family. Homodimer.

The enzyme catalyses Hydrolysis of terminal non-reducing beta-D-galactose residues in beta-D-galactosides.. Requires 4 M NaCl for maximal activity. Loss of activity if DTT or beta-mercaptoethanol is omitted from buffers. Addition of 5-20 mM EDTA, 1 mM Cu(2+) or 1 mM Zn(2+) results in loss of activity. When overexpressed, cleaves several different substrates including o-nitrophenyl-beta-D-galactopyranoside (ONPG), chromogen 5-bromo-4-chloro-3-indolyl-beta-D-galactopyranoside (X-Gal) and lactulose, but not lactose. Also has beta-D-fucosidase activity. No beta-L-fucosidase, beta-glucosidase, beta-arabinosidase or beta-xylosidase activity. The polypeptide is Beta-galactosidase BgaH (Haloferax lucentense (strain DSM 14919 / JCM 9276 / NCIMB 13854 / Aa 2.2) (Haloferax alicantei)).